The following is a 488-amino-acid chain: Glutamyl-tRNA(Gln) amidotransferase subunit A (488 aa).

Residues Lys-77 and Ser-152 each act as charge relay system in the active site. The active-site Acyl-ester intermediate is Ser-176.

Belongs to the amidase family. GatA subfamily. Heterotrimer of A, B and C subunits.

It catalyses the reaction L-glutamyl-tRNA(Gln) + L-glutamine + ATP + H2O = L-glutaminyl-tRNA(Gln) + L-glutamate + ADP + phosphate + H(+). Functionally, allows the formation of correctly charged Gln-tRNA(Gln) through the transamidation of misacylated Glu-tRNA(Gln) in organisms which lack glutaminyl-tRNA synthetase. The reaction takes place in the presence of glutamine and ATP through an activated gamma-phospho-Glu-tRNA(Gln). This Streptococcus pneumoniae (strain ATCC 700669 / Spain 23F-1) protein is Glutamyl-tRNA(Gln) amidotransferase subunit A.